Here is a 237-residue protein sequence, read N- to C-terminus: Demethylmenaquinone methyltransferase (237 aa).

S-adenosyl-L-methionine is bound by residues Thr-58, Asp-79, and 106–107; that span reads NA.

The protein belongs to the class I-like SAM-binding methyltransferase superfamily. MenG/UbiE family.

The catalysed reaction is a 2-demethylmenaquinol + S-adenosyl-L-methionine = a menaquinol + S-adenosyl-L-homocysteine + H(+). Its pathway is quinol/quinone metabolism; menaquinone biosynthesis; menaquinol from 1,4-dihydroxy-2-naphthoate: step 2/2. Its function is as follows. Methyltransferase required for the conversion of demethylmenaquinol (DMKH2) to menaquinol (MKH2). The polypeptide is Demethylmenaquinone methyltransferase (Listeria innocua serovar 6a (strain ATCC BAA-680 / CLIP 11262)).